A 351-amino-acid chain; its full sequence is Histidinol-phosphate aminotransferase (351 aa).

Lys-214 bears the N6-(pyridoxal phosphate)lysine mark.

This sequence belongs to the class-II pyridoxal-phosphate-dependent aminotransferase family. Histidinol-phosphate aminotransferase subfamily. Requires pyridoxal 5'-phosphate as cofactor.

The catalysed reaction is L-histidinol phosphate + 2-oxoglutarate = 3-(imidazol-4-yl)-2-oxopropyl phosphate + L-glutamate. It participates in amino-acid biosynthesis; L-histidine biosynthesis; L-histidine from 5-phospho-alpha-D-ribose 1-diphosphate: step 7/9. The polypeptide is Histidinol-phosphate aminotransferase (Methanosphaerula palustris (strain ATCC BAA-1556 / DSM 19958 / E1-9c)).